Consider the following 381-residue polypeptide: MANQWQAQAEQTITYEVQMTDGVLDPSNRALLDAGATVRTDQPRRFIVIDANVHEIYGDALRKYLAHHNCEYRLCVLSASEEAKTMESVFTVVDGLDSFGISRRHEPIIAIGGGIVLDIAGLAASMYRRSTPYVRVPTSLIGLVDAGVGIKTGVNFGSHKNRLGTYFAPTAALLDRGFLDTVDDRHISNGLAEILKIALVKDAELFRLMEEHAELLLAERLTGRTPTGDVVAREVFSRAVGGMLEELEPNLWEQELERLVDYGHSFSPTLEMRALPALLHGEAVTVDMALTTVLAEARGLVSTSDRERIFQVMRRLRLPVWHPLLEAGLLEHALRETTRHRDGLQRMPIPVGIGGARFLHDLTVAELTGAAESLRELGGGE.

NAD(+) is bound by residues Asp-50, 81 to 84 (EEAK), 114 to 118 (GIVLD), 138 to 139 (TS), Lys-151, Lys-160, and 178 to 181 (FLDT). The active site involves Lys-151. The a divalent metal cation site is built by Glu-193, His-264, and His-280.

It belongs to the sugar phosphate cyclases superfamily. EEVS family. NAD(+) is required as a cofactor. Requires Co(2+) as cofactor.

The catalysed reaction is D-sedoheptulose 7-phosphate = 2-epi-5-epi-valiolone + phosphate. The protein operates within antibiotic biosynthesis. Its function is as follows. Catalyzes the cyclization of D-sedoheptulose 7-phosphate to 2-epi-5-epi-valiolone. Involved in cetoniacytone A biosynthesis. In Actinomyces sp, this protein is 2-epi-5-epi-valiolone synthase.